Reading from the N-terminus, the 578-residue chain is Telomere repeat-binding protein 1 (578 aa).

The Ubiquitin-like domain occupies 293 to 372; it reads VKLRIKSFRV…HLDSLDFSLE (80 aa). Positions 440-467 are disordered; that stretch reads ELSSQSQPPSRKSRRSEQQQQQAAQRRI. Residues 463–522 enclose the HTH myb-type domain; the sequence is AQRRIRRPFSVAEVEALVQAVEKLGTGRWRDVKLCAFEDADHRTYVDLKDKWKTLVHTAK. Interaction with DNA regions lie at residues 465 to 469, 511 to 515, and 522 to 529; these read RRIRR, KDKWK, and KISPQQRR. The segment at residues 491–518 is a DNA-binding region (H-T-H motif); sequence WRDVKLCAFEDADHRTYVDLKDKWKTLV.

Homodimer and heterodimer with TRP2 and TRP3. Interacts with KU70. Expressed ubiquitously. Highest expression in flowers and leaves.

The protein resides in the nucleus. Binds specifically to the plant telomeric double-stranded DNA sequences 5'-GGTTTAG-3'. At least 4 repeats of telomeric sequences are required for binding. Induces DNA bending. In Arabidopsis thaliana (Mouse-ear cress), this protein is Telomere repeat-binding protein 1 (TRP1).